We begin with the raw amino-acid sequence, 247 residues long: Probable transcriptional regulatory protein ABO_0750 (247 aa).

This sequence belongs to the TACO1 family.

The protein localises to the cytoplasm. In Alcanivorax borkumensis (strain ATCC 700651 / DSM 11573 / NCIMB 13689 / SK2), this protein is Probable transcriptional regulatory protein ABO_0750.